Here is a 319-residue protein sequence, read N- to C-terminus: Cytochrome f (319 aa).

An N-terminal signal peptide occupies residues 1–34; sequence MQNRNTYDLKKKMTRLISVLVMIHIITRTSISNA. Heme contacts are provided by tyrosine 35, cysteine 55, cysteine 58, and histidine 59. The helical transmembrane segment at 285-304 threads the bilayer; sequence VKGLLLFLASVILAQIFLVL.

It belongs to the cytochrome f family. The 4 large subunits of the cytochrome b6-f complex are cytochrome b6, subunit IV (17 kDa polypeptide, petD), cytochrome f and the Rieske protein, while the 4 small subunits are PetG, PetL, PetM and PetN. The complex functions as a dimer. Heme is required as a cofactor.

The protein resides in the plastid. Its subcellular location is the chloroplast thylakoid membrane. In terms of biological role, component of the cytochrome b6-f complex, which mediates electron transfer between photosystem II (PSII) and photosystem I (PSI), cyclic electron flow around PSI, and state transitions. This Picea abies (Norway spruce) protein is Cytochrome f (petA).